Here is a 339-residue protein sequence, read N- to C-terminus: Nicotinate-nucleotide--dimethylbenzimidazole phosphoribosyltransferase (339 aa).

Residue E306 is the Proton acceptor of the active site.

This sequence belongs to the CobT family.

The enzyme catalyses 5,6-dimethylbenzimidazole + nicotinate beta-D-ribonucleotide = alpha-ribazole 5'-phosphate + nicotinate + H(+). The protein operates within nucleoside biosynthesis; alpha-ribazole biosynthesis; alpha-ribazole from 5,6-dimethylbenzimidazole: step 1/2. In terms of biological role, catalyzes the synthesis of alpha-ribazole-5'-phosphate from nicotinate mononucleotide (NAMN) and 5,6-dimethylbenzimidazole (DMB). This is Nicotinate-nucleotide--dimethylbenzimidazole phosphoribosyltransferase from Brucella melitensis biotype 1 (strain ATCC 23456 / CCUG 17765 / NCTC 10094 / 16M).